The following is a 398-amino-acid chain: Acetate kinase (398 aa).

Residue Asn-8 coordinates Mg(2+). Lys-15 provides a ligand contact to ATP. Arg-89 contributes to the substrate binding site. Asp-146 acts as the Proton donor/acceptor in catalysis. ATP is bound by residues 206–210 (HIGNG), 283–285 (DMR), and 331–335 (GMGEN). Glu-383 contributes to the Mg(2+) binding site.

This sequence belongs to the acetokinase family. Homodimer. Requires Mg(2+) as cofactor. It depends on Mn(2+) as a cofactor.

It is found in the cytoplasm. It catalyses the reaction acetate + ATP = acetyl phosphate + ADP. Its pathway is metabolic intermediate biosynthesis; acetyl-CoA biosynthesis; acetyl-CoA from acetate: step 1/2. Its function is as follows. Catalyzes the formation of acetyl phosphate from acetate and ATP. Can also catalyze the reverse reaction. In Streptococcus pyogenes serotype M49 (strain NZ131), this protein is Acetate kinase.